The chain runs to 902 residues: MSYNVIVPTTVLPPWLRIGQNWIFARHRRTEVGVVLPANTKFRVRADFAKWGITRPVIVRLLNNNRNTEREINLTNDQWIEMEHEHECVPFVDWPVGEKNTMAEVHFEIDGPHIPLPVYVFNTRPVENFKSEYRQSSSGYCFLYLDLVCILVPPASKNVLLDTDLFELHQFYNEIINYYDDLCGLVEDPYADTVDSNLPNKAAFVKADGGGPGGAYYGAFWTAPASTNLGEYLRVSPTNWMVIHELGHAYDFVFTVNTRLIEIWNNSFCDRIQYTWMNKTKRQQLARIYENQRPQKEAAIQALIDNNVPFDNWDFFEKLSIFAWLYNPQRGLDTLRNINHSYRLHAARNPVTPYPQIWAWLMSCGYDNFWLYFNRIGLYPADFYINEHNKVVHFNLHMRALALGQSVRYPIKYIITDFDLLQKNYDIKQYLESNFDLVIPEELRQTDLVADVRVVCVIDDPSQIIGEPFSLYDGNERVFESTVATDGNMYLVGVGPGVYTLRAPRGKDKRYKLHLAHSPNEPVHPANDHMYLLVTYPYYNQTLTYTRYITSDLAIDAAHLFGTDRLYVATIYFDALQQTVTVYLNNIRTGRENNTTLYFEMEIHNPFIGTSSKFTLLEDNVTMRQGYYKFPAVTFSSIRLHIRDDNRLMLVDKYLPAGDTLLFMFPNQIVDNNIFPDGSILTSTYNRIKEQAAFIENHKQLLYIENELRDSIYLASQFVNSDSNEFLKYFPDYFRDPHTFSYLFRFRGLGDFMLLELQIVPILNLASVRVGNHHNGPHSYFNTTYLSVEVRDTSGGVVFSYSRLGNEPMTHEHHKFEVFKDYTIHLFIQEPGQRLQLIVNKTLDTALPNSQNIYARLTATQLVVGEQSIIISDDNDFVPPPPRVNCGDQQIRVVETLKMIAF.

The 304-residue stretch at 27–330 folds into the Peptidase M60 domain; that stretch reads HRRTEVGVVL…IFAWLYNPQR (304 aa). 10 N-linked (GlcNAc...) asparagine; by host glycosylation sites follow: Asn-73, Asn-265, Asn-278, Asn-339, Asn-540, Asn-593, Asn-594, Asn-620, Asn-782, and Asn-840.

Involved in disruption of the peritrophic membrane and fusion of nucleocapsids with midgut cells. This chain is Viral-enhancing factor (VEF), found in Heliothis (HaGV).